We begin with the raw amino-acid sequence, 1194 residues long: ATP-dependent RNA helicase DHX30 (1194 aa).

The segment covering 1 to 10 (MFTLDSFRKD) has biased composition (basic and acidic residues). The segment at 1 to 27 (MFTLDSFRKDRTQHRQRQCKLPPPRLP) is disordered. Ser-6 is subject to Phosphoserine. Residues 53-121 (PKNLLNSVIG…QAAAAACQLF (69 aa)) enclose the DRBM domain. Residues 153–200 (WWRPEPTMPPTSWRQLNPENIRPAGTGGLSRSLGREEEEDEEEELEEG) are disordered. Residues 188 to 200 (EEEEDEEEELEEG) show a composition bias toward acidic residues. Phosphoserine is present on residues Ser-226 and Ser-380. The Helicase ATP-binding domain maps to 444–612 (LSAIEQHPVV…FGGCPVIKVP (169 aa)). Residue 457–464 (GDTGCGKT) participates in ATP binding. The DEAH box motif lies at 559 to 562 (DEVH). In terms of domain architecture, Helicase C-terminal spans 654 to 827 (LVTDLVLHID…NLVLQAKIHM (174 aa)).

This sequence belongs to the DEAD box helicase family. DEAH subfamily. As to quaternary structure, identified in a complex with TFAM and SSBP1. Interacts (via N-terminus) with ZC3HAV1 (via N-terminal domain) in an RNA-independent manner. Found in a complex with GRSF1, DDX28, FASTKD2 and FASTKD5.

Its subcellular location is the cytoplasm. It is found in the mitochondrion. The protein localises to the mitochondrion matrix. The protein resides in the mitochondrion nucleoid. The catalysed reaction is ATP + H2O = ADP + phosphate + H(+). RNA-dependent helicase. Plays an important role in the assembly of the mitochondrial large ribosomal subunit. Associates with mitochondrial DNA. Required for optimal function of the zinc-finger antiviral protein ZC3HAV1. Involved in nervous system development and differentiation through its involvement in the up-regulation of a number of genes which are required for neurogenesis, including GSC, NCAM1, neurogenin, and NEUROD. The protein is ATP-dependent RNA helicase DHX30 (Dhx30) of Rattus norvegicus (Rat).